Here is an 86-residue protein sequence, read N- to C-terminus: Large ribosomal subunit protein bL31B (86 aa).

The protein belongs to the bacterial ribosomal protein bL31 family. Type B subfamily. Part of the 50S ribosomal subunit.

This Ralstonia pickettii (strain 12J) protein is Large ribosomal subunit protein bL31B.